The following is a 371-amino-acid chain: MAELQEVQITEEKPLLPGQTPETAKEAELAARILLDQGQTHSVETPYGSVTFTVYGTPKPKRPAIFTYHDVGLNYKSCFQPLFRFGDMQEIIQNFVRVHVDAPGMEEGAPVFPLGYQYPSLDQLADMIPCILQYLNFSTIIGVGVGAGAYILSRYALNHPDTVEGLVLINIDPNAKGWMDWAAHKLTGLTSSIPDMILGHLFSQEELSGNSELIQKYRGIIQHAPNLENIELYWNSYNNRRDLNFERGGETTLKCPVMLVVGDQAPHEDAVVECNSKLDPTQTSFLKMADSGGQPQLTQPGKLTEAFKYFLQGMGYMASSCMTRLSRSRTASLTSAASIDGSRSRSRTLSQSSESGTLPSGPPGHTMEVSC.

The tract at residues 1–22 (MAELQEVQITEEKPLLPGQTPE) is disordered. At alanine 2 the chain carries N-acetylalanine. Threonine 20 bears the Phosphothreonine mark. Residues serine 326 and serine 328 each carry the phosphoserine modification. Threonine 330 carries the post-translational modification Phosphothreonine; by SGK1. Position 332 is a phosphoserine; by PKC/PRKCQ or SGK1 (serine 332). Threonine 334 carries the post-translational modification Phosphothreonine. The segment at 334–371 (TSAASIDGSRSRSRTLSQSSESGTLPSGPPGHTMEVSC) is disordered. Phosphoserine occurs at positions 335, 338, and 344. Phosphothreonine; by PKB/AKT1 or SGK1 is present on threonine 348. 4 positions are modified to phosphoserine: serine 350, serine 352, serine 353, and serine 355. Threonine 357 carries the phosphothreonine modification. The residue at position 370 (serine 370) is a Phosphoserine.

It belongs to the NDRG family. In terms of assembly, interacts with CTNNB1. As to expression, expressed at highest levels in brain, heart and liver, and at lower levels in kidney, colon, skeletal muscle, adrenal gland, ovary and uterus (at protein level).

The protein localises to the cytoplasm. Its subcellular location is the perinuclear region. The protein resides in the cell projection. It is found in the growth cone. Contributes to the regulation of the Wnt signaling pathway. Down-regulates CTNNB1-mediated transcriptional activation of target genes, such as CCND1, and may thereby act as tumor suppressor. May be involved in dendritic cell and neuron differentiation. The polypeptide is Protein NDRG2 (Ndrg2) (Mus musculus (Mouse)).